The sequence spans 261 residues: Oligodendrocyte transcription factor 1 (261 aa).

A disordered region spans residues 41–105 (PPISSSSSTS…LRRKINSRER (65 aa)). Positions 44 to 56 (SSSSSTSSSSTAS) are enriched in low complexity. Positions 95–154 (QLRRKINSRERKRMQDLNLAMDALREVILPYSAAHCQGAPGRKLSKIATLLLARNYILLL) constitute a bHLH domain.

In terms of tissue distribution, expressed specifically in the brain, including the corpus callosum, hippocampal and cerebral white matter. Also detected in cells scattered in gray matter, most probably in oligodendrocytes.

The protein resides in the nucleus. Its function is as follows. Promotes formation and maturation of oligodendrocytes, especially within the brain. Cooperates with OLIG2 to establish the pMN domain of the embryonic neural tube. This chain is Oligodendrocyte transcription factor 1 (Olig1), found in Rattus norvegicus (Rat).